A 552-amino-acid polypeptide reads, in one-letter code: Chaperonin GroEL (552 aa).

Residues 29–32, lysine 50, 86–90, glycine 420, and aspartate 501 each bind ATP; these read TAGP and DGTTT.

The protein belongs to the chaperonin (HSP60) family. Forms a cylinder of 14 subunits composed of two heptameric rings stacked back-to-back. Interacts with the co-chaperonin GroES.

The protein resides in the cytoplasm. The catalysed reaction is ATP + H2O + a folded polypeptide = ADP + phosphate + an unfolded polypeptide.. In terms of biological role, together with its co-chaperonin GroES, plays an essential role in assisting protein folding. The GroEL-GroES system forms a nano-cage that allows encapsulation of the non-native substrate proteins and provides a physical environment optimized to promote and accelerate protein folding. The protein is Chaperonin GroEL of Wolbachia pipientis subsp. Culex pipiens (strain wPip).